Here is a 20-residue protein sequence, read N- to C-terminus: Fibrinogen beta chain (20 aa).

Residues 1–20 (ATDYEDEEFPGAVPPSVGAR) are disordered. Threonine 2 carries O-linked (GalNAc...) threonine glycosylation. Tyrosine 4 carries the sulfotyrosine modification.

Heterohexamer; disulfide linked. Contains 2 sets of 3 non-identical chains (alpha, beta and gamma). The 2 heterotrimers are in head to head conformation with the N-termini in a small central domain. Post-translationally, conversion of fibrinogen to fibrin is triggered by thrombin, which cleaves fibrinopeptides A and B from alpha and beta chains, and thus exposes the N-terminal polymerization sites responsible for the formation of the soft clot.

It is found in the secreted. Cleaved by the protease thrombin to yield monomers which, together with fibrinogen alpha (FGA) and fibrinogen gamma (FGG), polymerize to form an insoluble fibrin matrix. Fibrin has a major function in hemostasis as one of the primary components of blood clots. In addition, functions during the early stages of wound repair to stabilize the lesion and guide cell migration during re-epithelialization. Was originally thought to be essential for platelet aggregation, based on in vitro studies using anticoagulated blood. However subsequent studies have shown that it is not absolutely required for thrombus formation in vivo. Enhances expression of SELP in activated platelets. Maternal fibrinogen is essential for successful pregnancy. Fibrin deposition is also associated with infection, where it protects against IFNG-mediated hemorrhage. May also facilitate the antibacterial immune response via both innate and T-cell mediated pathways. This Elephas maximus (Indian elephant) protein is Fibrinogen beta chain (FGB).